The primary structure comprises 92 residues: Large ribosomal subunit protein bL31 (92 aa).

The interval 66–92 (GMGSANPDVDAPAPKKAAKKSDAESDS) is disordered. Positions 70 to 80 (ANPDVDAPAPK) are enriched in low complexity.

It belongs to the bacterial ribosomal protein bL31 family. Type A subfamily. In terms of assembly, part of the 50S ribosomal subunit.

Functionally, binds the 23S rRNA. This Synechococcus sp. (strain RCC307) protein is Large ribosomal subunit protein bL31.